The following is a 404-amino-acid chain: S-adenosylmethionine synthase (404 aa).

139–144 (GKGSTD) contributes to the ATP binding site.

Belongs to the AdoMet synthase 2 family. Mg(2+) is required as a cofactor.

It carries out the reaction L-methionine + ATP + H2O = S-adenosyl-L-methionine + phosphate + diphosphate. The protein operates within amino-acid biosynthesis; S-adenosyl-L-methionine biosynthesis; S-adenosyl-L-methionine from L-methionine: step 1/1. Catalyzes the formation of S-adenosylmethionine from methionine and ATP. The protein is S-adenosylmethionine synthase of Saccharolobus islandicus (strain Y.N.15.51 / Yellowstone #2) (Sulfolobus islandicus).